The primary structure comprises 400 residues: Acetate kinase (400 aa).

Asn10 is a Mg(2+) binding site. Lys17 contacts ATP. Position 91 (Arg91) interacts with substrate. The active-site Proton donor/acceptor is the Asp150. Residues 210–214 (HLGNG), 285–287 (DCR), and 333–337 (GIGEN) each bind ATP. A Mg(2+)-binding site is contributed by Glu387.

The protein belongs to the acetokinase family. In terms of assembly, homodimer. It depends on Mg(2+) as a cofactor. Mn(2+) serves as cofactor.

It is found in the cytoplasm. The catalysed reaction is acetate + ATP = acetyl phosphate + ADP. Its pathway is metabolic intermediate biosynthesis; acetyl-CoA biosynthesis; acetyl-CoA from acetate: step 1/2. Functionally, catalyzes the formation of acetyl phosphate from acetate and ATP. Can also catalyze the reverse reaction. The sequence is that of Acetate kinase from Yersinia pestis bv. Antiqua (strain Antiqua).